The chain runs to 105 residues: uncharacterized protein (105 aa).

The next 2 helical transmembrane spans lie at 10 to 30 (YVVF…FKIG) and 48 to 68 (YPLA…YPPS).

It is found in the membrane. This is an uncharacterized protein from Acanthamoeba polyphaga mimivirus (APMV).